The sequence spans 247 residues: ATP synthase subunit a, chloroplastic (247 aa).

Transmembrane regions (helical) follow at residues 38-58 (QVLITSWVVIAILLGSATIAV), 95-115 (VPFIGTMFLFIFVSNWSGALL), 134-154 (INTTVALALLTSVAYFYAGLT), 199-219 (LVVVVLVSLVPSVVPIPVMFL), and 220-240 (GLFTSGIQALIFATLAAAYIG).

It belongs to the ATPase A chain family. As to quaternary structure, F-type ATPases have 2 components, CF(1) - the catalytic core - and CF(0) - the membrane proton channel. CF(1) has five subunits: alpha(3), beta(3), gamma(1), delta(1), epsilon(1). CF(0) has four main subunits: a, b, b' and c.

Its subcellular location is the plastid. The protein localises to the chloroplast thylakoid membrane. Its function is as follows. Key component of the proton channel; it plays a direct role in the translocation of protons across the membrane. This chain is ATP synthase subunit a, chloroplastic, found in Buxus microphylla (Littleleaf boxwood).